We begin with the raw amino-acid sequence, 144 residues long: Large ribosomal subunit protein uL15 (144 aa).

The disordered stretch occupies residues 1–52; it reads MRLNTLSPAEGAKHSAKRLGRGIGSGLGKTGGRGHKGQKSRTGSGVRRGFEG. Residues 21-31 are compositionally biased toward gly residues; that stretch reads RGIGSGLGKTG.

The protein belongs to the universal ribosomal protein uL15 family. As to quaternary structure, part of the 50S ribosomal subunit.

Its function is as follows. Binds to the 23S rRNA. The sequence is that of Large ribosomal subunit protein uL15 from Haemophilus influenzae (strain 86-028NP).